The following is a 289-amino-acid chain: Bifunctional protein FolD 2 (289 aa).

NADP(+) contacts are provided by residues 162–164 (GRS), S187, and I228.

Belongs to the tetrahydrofolate dehydrogenase/cyclohydrolase family. Homodimer.

The enzyme catalyses (6R)-5,10-methylene-5,6,7,8-tetrahydrofolate + NADP(+) = (6R)-5,10-methenyltetrahydrofolate + NADPH. The catalysed reaction is (6R)-5,10-methenyltetrahydrofolate + H2O = (6R)-10-formyltetrahydrofolate + H(+). It functions in the pathway one-carbon metabolism; tetrahydrofolate interconversion. Catalyzes the oxidation of 5,10-methylenetetrahydrofolate to 5,10-methenyltetrahydrofolate and then the hydrolysis of 5,10-methenyltetrahydrofolate to 10-formyltetrahydrofolate. This is Bifunctional protein FolD 2 from Deinococcus geothermalis (strain DSM 11300 / CIP 105573 / AG-3a).